An 899-amino-acid chain; its full sequence is Plasma membrane ATPase (899 aa).

A disordered region spans residues M1–D72. The Cytoplasmic segment spans residues M1 to K96. Residues D17–I29 are compositionally biased toward acidic residues. Residues F97–A117 form a helical membrane-spanning segment. Topologically, residues G118 to D121 are extracellular. The helical transmembrane segment at W122–I141 threads the bilayer. At Q142–N272 the chain is on the cytoplasmic side. Residues G273–F294 form a helical membrane-spanning segment. Residues Y295–R305 are Extracellular-facing. A helical transmembrane segment spans residues Y306–A328. The Cytoplasmic portion of the chain corresponds to V329–I700. D359 acts as the 4-aspartylphosphate intermediate in catalysis. The Mg(2+) site is built by D615 and D619. A helical transmembrane segment spans residues D701–Y719. At D720–R735 the chain is on the extracellular side. The helical transmembrane segment at L736–L755 threads the bilayer. Over T756 to Q805 the chain is Cytoplasmic. A helical membrane pass occupies residues L806–W826. Residues S827–R838 are Extracellular-facing. The helical transmembrane segment at V839–Y855 threads the bilayer. The Cytoplasmic portion of the chain corresponds to M856–N899.

Belongs to the cation transport ATPase (P-type) (TC 3.A.3) family. Type IIIA subfamily.

It is found in the cell membrane. It catalyses the reaction ATP + H2O + H(+)(in) = ADP + phosphate + 2 H(+)(out). Activated by high pH or also by potassium ions when the medium pH is low. The plasma membrane ATPase of plants and fungi is a hydrogen ion pump. The proton gradient it generates drives the active transport of nutrients by H(+)-symport. The resulting external acidification and/or internal alkinization may mediate growth responses. This Kluyveromyces lactis (strain ATCC 8585 / CBS 2359 / DSM 70799 / NBRC 1267 / NRRL Y-1140 / WM37) (Yeast) protein is Plasma membrane ATPase (PMA1).